The sequence spans 352 residues: tRNA pseudouridine synthase D (352 aa).

D81 acts as the Nucleophile in catalysis. The region spanning 157–303 (GIPNYFGAQR…MEHERRILRL (147 aa)) is the TRUD domain.

Belongs to the pseudouridine synthase TruD family.

It carries out the reaction uridine(13) in tRNA = pseudouridine(13) in tRNA. Its function is as follows. Responsible for synthesis of pseudouridine from uracil-13 in transfer RNAs. The sequence is that of tRNA pseudouridine synthase D from Pseudomonas syringae pv. syringae (strain B728a).